The sequence spans 511 residues: Myrosinase 4 (511 aa).

A signal peptide spans 1-23; sequence MAIPKAHYSLAVLVLLFVVVSSS. Intrachain disulfides connect Cys-31–Cys-450, Cys-39–Cys-445, and Cys-230–Cys-233. Asn-46 and Asn-53 each carry an N-linked (GlcNAc...) asparagine glycan. Residues Gln-64, His-165, and 210 to 211 each bind a beta-D-glucoside; that span reads NQ. A beta-D-glucoside-binding residues include Tyr-351 and Glu-418. The active-site Nucleophile is the Glu-418. N-linked (GlcNAc...) asparagine glycosylation occurs at Asn-428. A beta-D-glucoside is bound by residues Trp-467, 474–475, and Phe-483; that span reads EF. N-linked (GlcNAc...) asparagine glycosylation occurs at Asn-489.

The protein belongs to the glycosyl hydrolase 1 family. As to expression, specifically expressed in roots.

The catalysed reaction is a thioglucoside + H2O = a sugar + a thiol.. The enzyme catalyses Hydrolysis of terminal, non-reducing beta-D-glucosyl residues with release of beta-D-glucose.. Functionally, hydrolyzes sinigrin and, with lower efficiency, p-nitrophenyl beta-D-glucoside. This Arabidopsis thaliana (Mouse-ear cress) protein is Myrosinase 4.